Reading from the N-terminus, the 248-residue chain is NAD kinase (248 aa).

The Proton acceptor role is filled by aspartate 45. NAD(+) contacts are provided by residues aspartate 45 to glycine 46, arginine 50, asparagine 110 to glutamate 111, and aspartate 138.

The protein belongs to the NAD kinase family. The cofactor is a divalent metal cation.

It localises to the cytoplasm. It carries out the reaction NAD(+) + ATP = ADP + NADP(+) + H(+). Its function is as follows. Involved in the regulation of the intracellular balance of NAD and NADP, and is a key enzyme in the biosynthesis of NADP. Catalyzes specifically the phosphorylation on 2'-hydroxyl of the adenosine moiety of NAD to yield NADP. In Sulfurisphaera tokodaii (strain DSM 16993 / JCM 10545 / NBRC 100140 / 7) (Sulfolobus tokodaii), this protein is NAD kinase.